Reading from the N-terminus, the 342-residue chain is tRNA N6-adenosine threonylcarbamoyltransferase (342 aa).

Residues His-111 and His-115 each contribute to the Fe cation site. Residues 134–138 (LVSGG), Asp-167, Gly-180, and Asn-277 each bind substrate. A Fe cation-binding site is contributed by Asp-305.

Belongs to the KAE1 / TsaD family. The cofactor is Fe(2+).

It localises to the cytoplasm. The enzyme catalyses L-threonylcarbamoyladenylate + adenosine(37) in tRNA = N(6)-L-threonylcarbamoyladenosine(37) in tRNA + AMP + H(+). Functionally, required for the formation of a threonylcarbamoyl group on adenosine at position 37 (t(6)A37) in tRNAs that read codons beginning with adenine. Is involved in the transfer of the threonylcarbamoyl moiety of threonylcarbamoyl-AMP (TC-AMP) to the N6 group of A37, together with TsaE and TsaB. TsaD likely plays a direct catalytic role in this reaction. The chain is tRNA N6-adenosine threonylcarbamoyltransferase from Cellvibrio japonicus (strain Ueda107) (Pseudomonas fluorescens subsp. cellulosa).